The following is a 445-amino-acid chain: MSDVKYLQVEIVDKNTIRLQEDGKKGQQIRLDQIIKVDQSNILNTLEQAQREAYEREAQSRYQTKLAKELSEKDNTFLKQKAAWNQAHNTQIQQLYQQITNLENQVNNIKRETESKKDNEYQQQIVKLETQLQSIKKETESQKDLEYERKANKTKEENQQELERQRQYFLEQLEQAQKDIEELKTREERFSKWAIAKKGKELEKWCWEAYKNYEELFQNCVFAPYSELVKGAKKSIGVEDDESNINEKADFIFQVFNPNNDKEPFFSICCEMKTEFTESKSRTKNEDHVKKLIADAKRAKCQYGFLVSELELNTENDVQVQRMHTSNSEVEVYLVRPMFFIVMLRLFYFLAKKMFAQVDVNSEYLDKEALNASFSDLKKSLLEKTFTDLNKVFQNNIDELEKIEGLVTKLKAANEKALNSRLNNWEEKIRKFEFKLNKDIVKKLE.

Residues 139 to 160 are disordered; sequence TESQKDLEYERKANKTKEENQQ.

This is an uncharacterized protein from Mycoplasma pneumoniae (strain ATCC 29342 / M129 / Subtype 1) (Mycoplasmoides pneumoniae).